A 161-amino-acid polypeptide reads, in one-letter code: Phosphopantetheine adenylyltransferase (161 aa).

Residue serine 9 coordinates substrate. Residues serine 9–phenylalanine 10 and histidine 17 contribute to the ATP site. Substrate-binding residues include lysine 41, leucine 73, and arginine 87. ATP is bound by residues glycine 88–arginine 90, glutamate 98, and tyrosine 123–serine 129.

It belongs to the bacterial CoaD family. In terms of assembly, homohexamer. It depends on Mg(2+) as a cofactor.

The protein resides in the cytoplasm. It catalyses the reaction (R)-4'-phosphopantetheine + ATP + H(+) = 3'-dephospho-CoA + diphosphate. Its pathway is cofactor biosynthesis; coenzyme A biosynthesis; CoA from (R)-pantothenate: step 4/5. Reversibly transfers an adenylyl group from ATP to 4'-phosphopantetheine, yielding dephospho-CoA (dPCoA) and pyrophosphate. This chain is Phosphopantetheine adenylyltransferase, found in Syntrophomonas wolfei subsp. wolfei (strain DSM 2245B / Goettingen).